Here is a 102-residue protein sequence, read N- to C-terminus: Large ribosomal subunit protein mL63 (102 aa).

Belongs to the mitochondrion-specific ribosomal protein mL63 family. In terms of assembly, component of the mitochondrial large ribosomal subunit (mt-LSU). Mature mammalian 55S mitochondrial ribosomes consist of a small (28S) and a large (39S) subunit. The 28S small subunit contains a 12S ribosomal RNA (12S mt-rRNA) and 30 different proteins. The 39S large subunit contains a 16S rRNA (16S mt-rRNA), a copy of mitochondrial valine transfer RNA (mt-tRNA(Val)), which plays an integral structural role, and 52 different proteins.

The protein resides in the mitochondrion. The polypeptide is Large ribosomal subunit protein mL63 (MRPL57) (Homo sapiens (Human)).